A 612-amino-acid polypeptide reads, in one-letter code: Large ribosomal subunit assembly factor BipA (612 aa).

The tr-type G domain occupies 5-200 (NDLRNIAIIA…TIIKHVPAPV (196 aa)). GTP-binding positions include 17–22 (DHGKTT) and 130–133 (NKID).

The protein belongs to the TRAFAC class translation factor GTPase superfamily. Classic translation factor GTPase family. BipA subfamily. Monomer.

It is found in the cytoplasm. The catalysed reaction is GTP + H2O = GDP + phosphate + H(+). In terms of biological role, a 50S ribosomal subunit assembly protein with GTPase activity, required for 50S subunit assembly at low temperatures, may also play a role in translation. Binds GTP and analogs. Binds the 70S ribosome between the 30S and 50S subunits, in a similar position as ribosome-bound EF-G; it contacts a number of ribosomal proteins, both rRNAs and the A-site tRNA. The chain is Large ribosomal subunit assembly factor BipA from Bacillus subtilis (strain 168).